Reading from the N-terminus, the 309-residue chain is MATSTTLQSLLMKEDEEQRNKRRTTSTMFLKKDDEERINWVDLPPELTTSILLRLSVTDILDNARKLCRAWRRICKDPSMWRKINLRDCLMYEFDFESMCRHIVDLSQGGLLEINIEHFVSDSLLSYIVDRSCNLKSLGISIYEPMTNKGVMNGIEKLPLLETLVIFHSSIKLDLKAIGHACPQLKTLKLNSLGSELAHDISQVGYIPLLECDDDALAIAESMPKLRHLQLMGNGLTNTGLNAILDGCPHLEEHLDVRKCFNINLVGNLEKRCMKRIKELRRPHDSTADYPYSISVSMVVQMMITSRYH.

The interval 1-26 (MATSTTLQSLLMKEDEEQRNKRRTTS) is disordered. Residues 37–84 (RINWVDLPPELTTSILLRLSVTDILDNARKLCRAWRRICKDPSMWRKI) form the F-box domain.

The polypeptide is Putative F-box protein At4g05475 (Arabidopsis thaliana (Mouse-ear cress)).